Reading from the N-terminus, the 502-residue chain is Regulatory protein E2 (502 aa).

Residues 1–201 (MENLSERFNV…DTVFTPVTSS (201 aa)) are transactivation domain. Positions 195–388 (FTPVTSSTPP…RESGSVRLHG (194 aa)) are disordered. Residues 211 to 242 (ADSNTSSKTPTTDTASRLSPTGSGERSQQTST) show a composition bias toward polar residues. Composition is skewed to basic residues over residues 243–290 (KGRR…SRSR) and 298–311 (SKRR…RKTS). Over residues 312–344 (ATRGRGPGSPTTTTSDRAARSPSTTSSATSQRS) the composition is skewed to low complexity. The segment covering 357-367 (GRGRGGRRRHR) has biased composition (basic residues). Positions 418-502 (DPPVILVRGD…DRSFGSFDSL (85 aa)) are DNA-binding domain.

Belongs to the papillomaviridae E2 protein family. In terms of assembly, binds DNA as homodimer. Interacts with protein E1; this interaction greatly increases E1 DNA-binding activity. Interacts with protein L1; this interaction enhances E2-dependent replication and transcription activation. Interacts with protein L2; this interaction inhibits E2 transcriptional activity but not DNA replication function E2. Interacts with protein E7; this interaction inhibits E7 oncogenic activity. Interacts with host TAF1; this interaction modulates E2-dependent transcriptional regulation. Interacts with host BRD4; this interaction mediates E2 transcriptional activation function. Additionally, the interaction with host BRD4 on mitotic chromosomes mediates tethering of the viral genome. Interacts with host TOPBP1; this interaction is required for optimal viral DNA replication. Phosphorylated.

The protein resides in the host nucleus. Functionally, plays a role in the initiation of viral DNA replication. A dimer of E2 interacts with a dimer of E1 in order to improve specificity of E1 DNA binding activity. Once the complex recognizes and binds DNA at specific sites, the E2 dimer is removed from DNA. E2 also regulates viral transcription through binding to the E2RE response element (5'-ACCNNNNNNGGT-3') present in multiple copies in the regulatory regions of the viral genome. Activates or represses transcription depending on E2RE's position with regards to proximal promoter elements including the TATA-box. Repression occurs by sterically hindering the assembly of the transcription initiation complex. The polypeptide is Regulatory protein E2 (Human papillomavirus 25).